We begin with the raw amino-acid sequence, 269 residues long: JmjC domain-containing protein 8 (269 aa).

The signal sequence occupies residues 1–24 (MAAAGRRGLLLLFVLWMMVTVILP). Asn135, Asn145, and Asn214 each carry an N-linked (GlcNAc...) asparagine glycan. Residues 136–269 (DTLYFFGDNN…TSVFISTFLG (134 aa)) enclose the JmjC domain.

In terms of assembly, oligomer. Dimer. Interacts with PKM; regulates angiogenesis and metabolism. N-glycosylated.

The protein localises to the endoplasmic reticulum lumen. It is found in the cytoplasm. In terms of biological role, functions as a positive regulator of TNF-induced NF-kappaB signaling. Regulates angiogenesis and cellular metabolism through interaction with PKM. The sequence is that of JmjC domain-containing protein 8 from Mus musculus (Mouse).